Here is a 301-residue protein sequence, read N- to C-terminus: Hydroxymethylglutaryl-CoA lyase (301 aa).

A Pyruvate carboxyltransferase domain is found at 4–271 (VKVFEVGPRD…STGVDLEAVA (268 aa)). A substrate-binding site is contributed by Arg12. Asp13, His204, and His206 together coordinate a divalent metal cation. Cys237 is a catalytic residue. Asn246 is a binding site for a divalent metal cation.

This sequence belongs to the HMG-CoA lyase family.

It carries out the reaction (3S)-3-hydroxy-3-methylglutaryl-CoA = acetoacetate + acetyl-CoA. It functions in the pathway metabolic intermediate metabolism; (S)-3-hydroxy-3-methylglutaryl-CoA degradation; acetoacetate from (S)-3-hydroxy-3-methylglutaryl-CoA: step 1/1. Involved in the catabolism of branched amino acids such as leucine. The chain is Hydroxymethylglutaryl-CoA lyase (mvaB) from Pseudomonas mevalonii.